The chain runs to 585 residues: Zinc finger protein C11D3.17 (585 aa).

C2H2-type zinc fingers lie at residues 31–53 (FPCD…KACH) and 59–82 (IPCP…QRFH). T553 carries the phosphothreonine modification.

The protein localises to the nucleus. In Schizosaccharomyces pombe (strain 972 / ATCC 24843) (Fission yeast), this protein is Zinc finger protein C11D3.17.